The chain runs to 426 residues: Protein FAM181B (426 aa).

Disordered regions lie at residues 106-157 and 226-246; these read GLMG…AAAA and NLPP…CGPS. Positions 128–141 are enriched in low complexity; it reads PLAAPSAPTVAAPA.

This sequence belongs to the FAM181 family.

The polypeptide is Protein FAM181B (FAM181B) (Homo sapiens (Human)).